We begin with the raw amino-acid sequence, 82 residues long: Small ribosomal subunit protein uS17 (82 aa).

This sequence belongs to the universal ribosomal protein uS17 family. In terms of assembly, part of the 30S ribosomal subunit.

Its function is as follows. One of the primary rRNA binding proteins, it binds specifically to the 5'-end of 16S ribosomal RNA. This chain is Small ribosomal subunit protein uS17, found in Nitrobacter winogradskyi (strain ATCC 25391 / DSM 10237 / CIP 104748 / NCIMB 11846 / Nb-255).